We begin with the raw amino-acid sequence, 183 residues long: Nucleosome assembly protein 1-like 5 (183 aa).

A disordered region spans residues 1 to 71 (MADSENQGPA…APKPKNDFIE (71 aa)). 2 stretches are compositionally biased toward low complexity: residues 7–21 (QGPA…AAEA) and 28–49 (AEGG…SAAG). Residues 81 to 107 (VLALKKLQKRCDKIEAKFDKEFQALEK) are a coiled coil. A compositionally biased stretch (acidic residues) spans 135 to 161 (EGEEEEEEEYEDDEEEGEEEEEEEEAA). Residues 135 to 183 (EGEEEEEEEYEDDEEEGEEEEEEEEAAAEAAAGAKHDDAHAEMPDDAKK) form a disordered region. A compositionally biased stretch (basic and acidic residues) spans 168-183 (AKHDDAHAEMPDDAKK).

It belongs to the nucleosome assembly protein (NAP) family.

The protein localises to the nucleus. In Pongo abelii (Sumatran orangutan), this protein is Nucleosome assembly protein 1-like 5 (NAP1L5).